Reading from the N-terminus, the 599-residue chain is UvrABC system protein C (599 aa).

The 79-residue stretch at 18-96 (QLPGVYKMLG…IKQHRPPYNI (79 aa)) folds into the GIY-YIG domain. In terms of domain architecture, UVR spans 207-242 (KELNQELIAKMEQAAADLEFEKAVFYRDRLSLLREV).

This sequence belongs to the UvrC family. As to quaternary structure, interacts with UvrB in an incision complex.

The protein resides in the cytoplasm. The UvrABC repair system catalyzes the recognition and processing of DNA lesions. UvrC both incises the 5' and 3' sides of the lesion. The N-terminal half is responsible for the 3' incision and the C-terminal half is responsible for the 5' incision. The polypeptide is UvrABC system protein C (Acinetobacter baumannii (strain SDF)).